The primary structure comprises 314 residues: MGWALKKVCFLGVIFLISACTVKKNGVKNLSYKHESLRAYENAKDYDPTTKKATYKRNFFERHFKHHTDSQGNNTKQPLDNGMRDSNAIQRATMHPYQVGGKWYYPTKVDLGEKFDGIASWYGPNFHAKKTSNGEIYNMYAHTAAHKTLPMNTVVKVINVDNNSSTIVRINDRGPFVSNRIIDLSNAAARDIDMVQKGTASVRLIVLGFGGVISKQYEQSFNANYSKILHKEFKVGESEKSVSGGKFSLQMGAFRNQIGAQTLADKLQAENKNYSVKVAFKDDLYKVLVQGFQSEEEARDFMKKYNQNAVLTRE.

The first 19 residues, 1-19, serve as a signal peptide directing secretion; the sequence is MGWALKKVCFLGVIFLISA. A lipid anchor (N-palmitoyl cysteine) is attached at Cys-20. A lipid anchor (S-diacylglycerol cysteine) is attached at Cys-20. The region spanning 241-314 is the SPOR domain; it reads SVSGGKFSLQ…YNQNAVLTRE (74 aa).

It belongs to the RlpA family.

The protein resides in the cell membrane. Lytic transglycosylase with a strong preference for naked glycan strands that lack stem peptides. The polypeptide is Endolytic peptidoglycan transglycosylase RlpA (Helicobacter pylori (strain J99 / ATCC 700824) (Campylobacter pylori J99)).